Consider the following 168-residue polypeptide: Shikimate kinase (168 aa).

10 to 15 (GVGKTT) is a binding site for ATP. Mg(2+) is bound at residue T14. 3 residues coordinate substrate: D32, R56, and G77. R115 lines the ATP pocket. R133 provides a ligand contact to substrate.

Belongs to the shikimate kinase family. In terms of assembly, monomer. Requires Mg(2+) as cofactor.

The protein resides in the cytoplasm. It carries out the reaction shikimate + ATP = 3-phosphoshikimate + ADP + H(+). It functions in the pathway metabolic intermediate biosynthesis; chorismate biosynthesis; chorismate from D-erythrose 4-phosphate and phosphoenolpyruvate: step 5/7. Catalyzes the specific phosphorylation of the 3-hydroxyl group of shikimic acid using ATP as a cosubstrate. In Macrococcus caseolyticus (strain JCSC5402) (Macrococcoides caseolyticum), this protein is Shikimate kinase.